We begin with the raw amino-acid sequence, 877 residues long: Translation initiation factor IF-2 (877 aa).

A disordered region spans residues 48 to 289 (SSFQNSAPAE…QITKRKERPL (242 aa)). Residues 78 to 89 (RKNEKKPEENNT) show a composition bias toward basic and acidic residues. Positions 92–101 (KSNRRRNNKR) are enriched in basic residues. Positions 102-116 (RSSDRARDNKERDAK) are enriched in basic and acidic residues. Residues 123–132 (KAAALLQQFK) show a composition bias toward low complexity. Basic and acidic residues-rich tracts occupy residues 135–155 (QRAE…EYHE) and 162–189 (KEQS…EKKV). A compositionally biased stretch (basic residues) spans 277–286 (PRKQITKRKE). Positions 378 to 547 (KRPPVVTIMG…LLQADVMELK (170 aa)) constitute a tr-type G domain. The segment at 387–394 (GHVDHGKT) is G1. Position 387 to 394 (387 to 394 (GHVDHGKT)) interacts with GTP. The tract at residues 412 to 416 (GITQR) is G2. The segment at 433–436 (DTPG) is G3. GTP contacts are provided by residues 433-437 (DTPGH) and 487-490 (NKMD). Residues 487 to 490 (NKMD) form a G4 region. The interval 523 to 525 (SAK) is G5.

The protein belongs to the TRAFAC class translation factor GTPase superfamily. Classic translation factor GTPase family. IF-2 subfamily.

The protein resides in the cytoplasm. In terms of biological role, one of the essential components for the initiation of protein synthesis. Protects formylmethionyl-tRNA from spontaneous hydrolysis and promotes its binding to the 30S ribosomal subunits. Also involved in the hydrolysis of GTP during the formation of the 70S ribosomal complex. The sequence is that of Translation initiation factor IF-2 from Lactobacillus acidophilus (strain ATCC 700396 / NCK56 / N2 / NCFM).